Consider the following 390-residue polypeptide: 8-amino-7-oxononanoate synthase (390 aa).

A substrate-binding site is contributed by arginine 19. A pyridoxal 5'-phosphate-binding site is contributed by 106–107; it reads GY. Position 131 (histidine 131) interacts with substrate. Serine 176, histidine 204, and threonine 233 together coordinate pyridoxal 5'-phosphate. Position 236 is an N6-(pyridoxal phosphate)lysine (lysine 236). Residue threonine 350 participates in substrate binding.

Belongs to the class-II pyridoxal-phosphate-dependent aminotransferase family. BioF subfamily. As to quaternary structure, homodimer. It depends on pyridoxal 5'-phosphate as a cofactor.

The catalysed reaction is 6-carboxyhexanoyl-[ACP] + L-alanine + H(+) = (8S)-8-amino-7-oxononanoate + holo-[ACP] + CO2. It functions in the pathway cofactor biosynthesis; biotin biosynthesis. Catalyzes the decarboxylative condensation of pimeloyl-[acyl-carrier protein] and L-alanine to produce 8-amino-7-oxononanoate (AON), [acyl-carrier protein], and carbon dioxide. The polypeptide is 8-amino-7-oxononanoate synthase (Pseudomonas putida (strain ATCC 47054 / DSM 6125 / CFBP 8728 / NCIMB 11950 / KT2440)).